A 117-amino-acid chain; its full sequence is Immunoglobulin kappa variable 1-9 (117 aa).

Positions 1–22 (MDMRVPAQLLGLLLLWLPGARC) are cleaved as a signal peptide. The segment at 23 to 45 (DIQLTQSPSFLSASVGDRVTITC) is framework-1. In terms of domain architecture, Ig-like spans 24-117 (IQLTQSPSFL…YYCQQLNSYP (94 aa)). An intrachain disulfide couples C45 to C110. Residues 46-56 (RASQGISSYLA) form a complementarity-determining-1 region. The interval 57–71 (WYQQKPGKAPKLLIY) is framework-2. Positions 72–78 (AASTLQS) are complementarity-determining-2. The interval 79–110 (GVPSRFSGSGSGTEFTLTISSLQPEDFATYYC) is framework-3. The complementarity-determining-3 stretch occupies residues 111 to 117 (QQLNSYP).

As to quaternary structure, immunoglobulins are composed of two identical heavy chains and two identical light chains; disulfide-linked.

The protein resides in the secreted. Its subcellular location is the cell membrane. Its function is as follows. V region of the variable domain of immunoglobulin light chains that participates in the antigen recognition. Immunoglobulins, also known as antibodies, are membrane-bound or secreted glycoproteins produced by B lymphocytes. In the recognition phase of humoral immunity, the membrane-bound immunoglobulins serve as receptors which, upon binding of a specific antigen, trigger the clonal expansion and differentiation of B lymphocytes into immunoglobulins-secreting plasma cells. Secreted immunoglobulins mediate the effector phase of humoral immunity, which results in the elimination of bound antigens. The antigen binding site is formed by the variable domain of one heavy chain, together with that of its associated light chain. Thus, each immunoglobulin has two antigen binding sites with remarkable affinity for a particular antigen. The variable domains are assembled by a process called V-(D)-J rearrangement and can then be subjected to somatic hypermutations which, after exposure to antigen and selection, allow affinity maturation for a particular antigen. The sequence is that of Immunoglobulin kappa variable 1-9 from Homo sapiens (Human).